We begin with the raw amino-acid sequence, 245 residues long: DNA repair protein RecO (245 aa).

This sequence belongs to the RecO family.

Its function is as follows. Involved in DNA repair and RecF pathway recombination. The polypeptide is DNA repair protein RecO (Anaplasma phagocytophilum (strain HZ)).